A 230-amino-acid chain; its full sequence is Large ribosomal subunit protein uL1 (230 aa).

This sequence belongs to the universal ribosomal protein uL1 family. In terms of assembly, part of the 50S ribosomal subunit.

Functionally, binds directly to 23S rRNA. The L1 stalk is quite mobile in the ribosome, and is involved in E site tRNA release. Protein L1 is also a translational repressor protein, it controls the translation of the L11 operon by binding to its mRNA. The sequence is that of Large ribosomal subunit protein uL1 from Ruminiclostridium cellulolyticum (strain ATCC 35319 / DSM 5812 / JCM 6584 / H10) (Clostridium cellulolyticum).